The sequence spans 214 residues: Urease accessory protein UreE (214 aa).

A disordered region spans residues 163–214 (NAEPSGVDHSHEATDSGHGYGEDHDHDHSHDHNHDHDHNHDHDHSHSHDSHE). The span at 168–214 (GVDHSHEATDSGHGYGEDHDHDHSHDHNHDHDHNHDHDHSHSHDSHE) shows a compositional bias: basic and acidic residues.

The protein belongs to the UreE family.

Its subcellular location is the cytoplasm. Its function is as follows. Involved in urease metallocenter assembly. Binds nickel. Probably functions as a nickel donor during metallocenter assembly. In Natronomonas pharaonis (strain ATCC 35678 / DSM 2160 / CIP 103997 / JCM 8858 / NBRC 14720 / NCIMB 2260 / Gabara) (Halobacterium pharaonis), this protein is Urease accessory protein UreE.